A 437-amino-acid chain; its full sequence is Nuclear distribution protein PAC1 (437 aa).

Residues leucine 64–asparagine 94 are a coiled coil. 7 WD repeats span residues leucine 114–threonine 153, alanine 156–lysine 217, glycine 221–threonine 260, glycine 263–threonine 301, glycine 304–leucine 356, glycine 358–arginine 397, and alanine 401–glutamine 437. The disordered stretch occupies residues aspartate 165 to valine 186. A compositionally biased stretch (basic and acidic residues) spans alanine 173–valine 186.

This sequence belongs to the WD repeat LIS1/nudF family. Self-associates. Interacts with NDL1 and dynein.

It is found in the cytoplasm. It localises to the cytoskeleton. The protein localises to the spindle pole. Functionally, positively regulates the activity of the minus-end directed microtubule motor protein dynein. Plays a central role in positioning the mitotic spindle at the bud neck during cell division. Targets cytoplasmic dynein to microtubule plus ends, thereby promoting dynein-mediated microtubule sliding along the bud cortex and consequently the movement of the mitotic spindle to the bud neck. The sequence is that of Nuclear distribution protein PAC1 from Yarrowia lipolytica (strain CLIB 122 / E 150) (Yeast).